The sequence spans 446 residues: Tol-Pal system protein TolB (446 aa).

Positions 1–43 (MRKLWAPNWLSRRQNANPTRDQSRHALMAWLAAALMSAGAAHA) are cleaved as a signal peptide.

The protein belongs to the TolB family. In terms of assembly, the Tol-Pal system is composed of five core proteins: the inner membrane proteins TolA, TolQ and TolR, the periplasmic protein TolB and the outer membrane protein Pal. They form a network linking the inner and outer membranes and the peptidoglycan layer.

It localises to the periplasm. In terms of biological role, part of the Tol-Pal system, which plays a role in outer membrane invagination during cell division and is important for maintaining outer membrane integrity. In Cupriavidus metallidurans (strain ATCC 43123 / DSM 2839 / NBRC 102507 / CH34) (Ralstonia metallidurans), this protein is Tol-Pal system protein TolB.